Consider the following 60-residue polypeptide: Andropin (60 aa).

Residues 1–23 form the signal peptide; sequence MKYFVVLVVLALILAIAVGPSDA.

Belongs to the andropin family. Ejaculatory duct of adult males.

It is found in the secreted. Its function is as follows. Male-specific peptide with moderate activity against Gram-positive bacteria. This is Andropin (Anp) from Drosophila simulans (Fruit fly).